A 155-amino-acid chain; its full sequence is MAPK regulated corepressor interacting protein 2 (155 aa).

Methionine 1 is modified (N-acetylmethionine). A disordered region spans residues 1–59 (MYTITKGPSKLVAQRRTGPTQQQVESRLGELLKCRHSAPTPQHPRAQPPGPWPLSSPGP). Arginine 35 carries the post-translational modification Omega-N-methylarginine. Residues 46 to 56 (AQPPGPWPLSS) are compositionally biased toward pro residues. Serine 56 carries the phosphoserine modification. Residue arginine 60 is modified to Omega-N-methylarginine. Serine 77 bears the Phosphoserine mark.

The protein belongs to the MCRIP family. As to quaternary structure, interacts with DDX6. Interacts with MCRIP1.

It is found in the cytoplasm. It localises to the stress granule. Its subcellular location is the nucleus. In Bos taurus (Bovine), this protein is MAPK regulated corepressor interacting protein 2 (MCRIP2).